The sequence spans 513 residues: Probable tubulin polyglutamylase ttll-15 (513 aa).

The TTL domain occupies 73-411 (VTGSYESAHT…STPITKEADI (339 aa)). ATP-binding positions include 216–219 (QKFV), Lys229, and Asp231.

The protein belongs to the tubulin--tyrosine ligase family. Expressed in hypodermis and pharyngeal muscles.

Probable polyglutamylase that forms polyglutamate side chains on tubulin. Probably acts when complexed with other proteins. Appears to be dispensable for polar spindle formation in dividing embryonic cells, for cilia-dependent osmotic avoidance and for male mating behavior. Regulates microtubule dynamics in uterine muscle cells. In Caenorhabditis elegans, this protein is Probable tubulin polyglutamylase ttll-15.